The chain runs to 172 residues: Peptidyl-prolyl cis-trans isomerase (172 aa).

In terms of domain architecture, PPIase cyclophilin-type spans 7-170; sequence FFDMAIAGNP…RPVTIADCGQ (164 aa).

This sequence belongs to the cyclophilin-type PPIase family. As to expression, expressed in meristematic tissues, with higher levels in nodules.

The protein localises to the cytoplasm. It catalyses the reaction [protein]-peptidylproline (omega=180) = [protein]-peptidylproline (omega=0). Its activity is regulated as follows. Binds cyclosporin A (CsA). CsA mediates some of its effects via an inhibitory action on PPIase. Functionally, PPIases accelerate the folding of proteins. It catalyzes the cis-trans isomerization of proline imidic peptide bonds in oligopeptides. The chain is Peptidyl-prolyl cis-trans isomerase from Lupinus luteus (European yellow lupine).